The following is a 183-amino-acid chain: Integrase-like protein y4lS (183 aa).

A Resolvase/invertase-type recombinase catalytic domain is found at 2–136 (ARIGYARTFT…EGIAAARKRG (135 aa)).

It belongs to the site-specific recombinase resolvase family.

The sequence is that of Integrase-like protein y4lS from Sinorhizobium fredii (strain NBRC 101917 / NGR234).